The sequence spans 209 residues: Nascent polypeptide-associated complex subunit alpha (209 aa).

The span at 1 to 21 (MSNPRVEELPDEEPKKTTVQE) shows a compositional bias: basic and acidic residues. 2 disordered regions span residues 1–51 (MSNP…HNRN) and 121–175 (QLAS…DKDI). The segment covering 22-36 (HEDDSSDDSEVEEVG) has biased composition (acidic residues). In terms of domain architecture, NAC-A/B spans 49-114 (NRNEKKARKA…AKIEDVNAAA (66 aa)). A compositionally biased stretch (basic and acidic residues) spans 127–150 (AEDHSGHNHGEPSKAVEADEKKED). The span at 151–166 (KEDDEDEEEEEEEEVD) shows a compositional bias: acidic residues. The region spanning 170-209 (LEDKDIELVMTQANVSRNKAVKALKENDNDIVNSIMALSI) is the UBA domain.

The protein belongs to the NAC-alpha family. As to quaternary structure, part of the nascent polypeptide-associated complex (NAC), consisting of EGD2 and EGD1. NAC associates with ribosomes via EGD1.

It localises to the cytoplasm. It is found in the nucleus. Its function is as follows. Component of the nascent polypeptide-associated complex (NAC), a dynamic component of the ribosomal exit tunnel, protecting the emerging polypeptides from interaction with other cytoplasmic proteins to ensure appropriate nascent protein targeting. The NAC complex also promotes mitochondrial protein import by enhancing productive ribosome interactions with the outer mitochondrial membrane and blocks the inappropriate interaction of ribosomes translating non-secretory nascent polypeptides with translocation sites in the membrane of the endoplasmic reticulum. EGD2 may also be involved in transcription regulation. This chain is Nascent polypeptide-associated complex subunit alpha (EGD2), found in Gibberella zeae (strain ATCC MYA-4620 / CBS 123657 / FGSC 9075 / NRRL 31084 / PH-1) (Wheat head blight fungus).